Consider the following 214-residue polypeptide: ATP phosphoribosyltransferase (214 aa).

This sequence belongs to the ATP phosphoribosyltransferase family. Short subfamily. As to quaternary structure, heteromultimer composed of HisG and HisZ subunits.

It localises to the cytoplasm. The enzyme catalyses 1-(5-phospho-beta-D-ribosyl)-ATP + diphosphate = 5-phospho-alpha-D-ribose 1-diphosphate + ATP. It participates in amino-acid biosynthesis; L-histidine biosynthesis; L-histidine from 5-phospho-alpha-D-ribose 1-diphosphate: step 1/9. In terms of biological role, catalyzes the condensation of ATP and 5-phosphoribose 1-diphosphate to form N'-(5'-phosphoribosyl)-ATP (PR-ATP). Has a crucial role in the pathway because the rate of histidine biosynthesis seems to be controlled primarily by regulation of HisG enzymatic activity. This Marinomonas sp. (strain MWYL1) protein is ATP phosphoribosyltransferase.